A 275-amino-acid chain; its full sequence is Elongation factor Ts (275 aa).

The involved in Mg(2+) ion dislocation from EF-Tu stretch occupies residues 76–79 (TDFV).

Belongs to the EF-Ts family.

The protein resides in the cytoplasm. Associates with the EF-Tu.GDP complex and induces the exchange of GDP to GTP. It remains bound to the aminoacyl-tRNA.EF-Tu.GTP complex up to the GTP hydrolysis stage on the ribosome. The chain is Elongation factor Ts from Salinispora tropica (strain ATCC BAA-916 / DSM 44818 / JCM 13857 / NBRC 105044 / CNB-440).